Consider the following 657-residue polypeptide: Protein FAM200B (657 aa).

It belongs to the FAM200 family.

In Homo sapiens (Human), this protein is Protein FAM200B.